A 413-amino-acid polypeptide reads, in one-letter code: Serine/threonine transporter SstT (413 aa).

10 consecutive transmembrane segments (helical) span residues 18-38 (LSLV…ALFA), 52-72 (FVSA…MASI), 86-106 (ILFL…IASM), 119-139 (IAVS…LSVV), 145-165 (ALMN…GVAI), 196-216 (LGIF…ALIG), 221-241 (LAVL…LIVF), 292-312 (VSIP…ITVL), 320-340 (LGIA…AICA), and 360-380 (LFGI…IIGV).

It belongs to the dicarboxylate/amino acid:cation symporter (DAACS) (TC 2.A.23) family.

The protein resides in the cell inner membrane. It carries out the reaction L-serine(in) + Na(+)(in) = L-serine(out) + Na(+)(out). The enzyme catalyses L-threonine(in) + Na(+)(in) = L-threonine(out) + Na(+)(out). Its function is as follows. Involved in the import of serine and threonine into the cell, with the concomitant import of sodium (symport system). In Pseudomonas fluorescens (strain Pf0-1), this protein is Serine/threonine transporter SstT.